We begin with the raw amino-acid sequence, 328 residues long: Malate dehydrogenase (328 aa).

11–17 (GAAGQIG) lines the NAD(+) pocket. Substrate contacts are provided by arginine 94 and arginine 100. Residues asparagine 107, glutamine 114, and 131–133 (VGN) each bind NAD(+). 2 residues coordinate substrate: asparagine 133 and arginine 164. The Proton acceptor role is filled by histidine 189.

This sequence belongs to the LDH/MDH superfamily. MDH type 2 family.

It catalyses the reaction (S)-malate + NAD(+) = oxaloacetate + NADH + H(+). In terms of biological role, catalyzes the reversible oxidation of malate to oxaloacetate. This chain is Malate dehydrogenase, found in Xanthomonas euvesicatoria pv. vesicatoria (strain 85-10) (Xanthomonas campestris pv. vesicatoria).